A 170-amino-acid polypeptide reads, in one-letter code: Double homeobox protein 1 (170 aa).

DNA-binding regions (homeobox) lie at residues 19–78 and 94–153; these read GRRM…LRQH and GRRK…RGQS. A disordered region spans residues 75–100; it reads LRQHRRQSRPWPGRRDPQKGRRKRTA.

Belongs to the paired homeobox family. As to expression, expressed in rhabdomyosarcoma TE671 cells as well as in several other normal and cancer cells.

It is found in the nucleus. Its function is as follows. Probable transcription activator. Binds the P5 DNA element sequence 5'-GATCTGAGTCTAATTGAGAATTACTGTAC-3'. This is Double homeobox protein 1 (DUX1) from Homo sapiens (Human).